The primary structure comprises 222 residues: Protein MKS1 (222 aa).

The tract at residues 1–61 (MDPSEYFAGG…PNRDQPPPYI (61 aa)) is disordered. Polar residues predominate over residues 12 to 21 (PSDQQNQKRQ). Ser-30 bears the Phosphoserine mark. A compositionally biased stretch (basic residues) spans 37 to 46 (DSHKIKKPPK). Positions 47 to 61 (HPAPPPNRDQPPPYI) are enriched in pro residues. Ser-72 bears the Phosphoserine mark. The VQ motif lies at 83 to 92 (FMNVVQRLTG). Residues 105–130 (GDVSPAARLASTENASPRGGKEPAAR) are disordered. Phosphoserine is present on residues Ser-108 and Ser-120.

Interacts with MPK4, WRKY25 and WRKY33. Phosphorylated on serine residue by MPK4.

It is found in the nucleus. Its function is as follows. Regulator of plant defense response. May contribute to MPK4-regulated defense activation by coupling the kinase to specific WRKY transcription factors. The polypeptide is Protein MKS1 (MKS1) (Arabidopsis thaliana (Mouse-ear cress)).